The sequence spans 468 residues: 3-isopropylmalate dehydratase large subunit (468 aa).

[4Fe-4S] cluster-binding residues include cysteine 349, cysteine 409, and cysteine 412.

The protein belongs to the aconitase/IPM isomerase family. LeuC type 1 subfamily. As to quaternary structure, heterodimer of LeuC and LeuD. The cofactor is [4Fe-4S] cluster.

It carries out the reaction (2R,3S)-3-isopropylmalate = (2S)-2-isopropylmalate. The protein operates within amino-acid biosynthesis; L-leucine biosynthesis; L-leucine from 3-methyl-2-oxobutanoate: step 2/4. Functionally, catalyzes the isomerization between 2-isopropylmalate and 3-isopropylmalate, via the formation of 2-isopropylmaleate. This is 3-isopropylmalate dehydratase large subunit from Jannaschia sp. (strain CCS1).